A 151-amino-acid polypeptide reads, in one-letter code: Ribonuclease H (151 aa).

Residues 1-143 (MEEYVIYTDG…VDRVARKEAA (143 aa)) enclose the RNase H type-1 domain. Positions 9, 48, 71, and 135 each coordinate Mg(2+).

The protein belongs to the RNase H family. Monomer. The cofactor is Mg(2+).

It is found in the cytoplasm. The catalysed reaction is Endonucleolytic cleavage to 5'-phosphomonoester.. Its function is as follows. Endonuclease that specifically degrades the RNA of RNA-DNA hybrids. The protein is Ribonuclease H of Neorickettsia sennetsu (strain ATCC VR-367 / Miyayama) (Ehrlichia sennetsu).